Reading from the N-terminus, the 231-residue chain is Large ribosomal subunit protein uL1 (231 aa).

It belongs to the universal ribosomal protein uL1 family. As to quaternary structure, part of the 50S ribosomal subunit.

Its function is as follows. Binds directly to 23S rRNA. The L1 stalk is quite mobile in the ribosome, and is involved in E site tRNA release. In terms of biological role, protein L1 is also a translational repressor protein, it controls the translation of the L11 operon by binding to its mRNA. In Francisella tularensis subsp. tularensis (strain WY96-3418), this protein is Large ribosomal subunit protein uL1.